Here is a 962-residue protein sequence, read N- to C-terminus: Translation initiation factor IF-2 (962 aa).

Disordered stretches follow at residues 122-263 (EVGV…EPAR), 293-327 (TEEV…TRRK), and 341-362 (IAAQ…AKEP). A compositionally biased stretch (low complexity) spans 156 to 173 (AVEPQTVVPPVAAPAAEV). The segment covering 188–202 (KPPEEKETKVKHAEP) has biased composition (basic and acidic residues). Positions 244-256 (RPKKAKKRRRKKV) are enriched in basic residues. Composition is skewed to basic and acidic residues over residues 308–327 (RPEE…TRRK) and 344–362 (QDDR…AKEP). The tr-type G domain maps to 455–624 (RRPPVITVMG…LLQAELLELK (170 aa)). The tract at residues 464–471 (GHVDHGKT) is G1. 464–471 (GHVDHGKT) lines the GTP pocket. Residues 489-493 (GITQH) are G2. A G3 region spans residues 510-513 (DTPG). GTP-binding positions include 510–514 (DTPGH) and 564–567 (NKVD). The tract at residues 564 to 567 (NKVD) is G4. The G5 stretch occupies residues 600–602 (SAK).

This sequence belongs to the TRAFAC class translation factor GTPase superfamily. Classic translation factor GTPase family. IF-2 subfamily.

It localises to the cytoplasm. Its function is as follows. One of the essential components for the initiation of protein synthesis. Protects formylmethionyl-tRNA from spontaneous hydrolysis and promotes its binding to the 30S ribosomal subunits. Also involved in the hydrolysis of GTP during the formation of the 70S ribosomal complex. This Syntrophobacter fumaroxidans (strain DSM 10017 / MPOB) protein is Translation initiation factor IF-2.